The primary structure comprises 85 residues: Small ribosomal subunit protein uS17 (85 aa).

It belongs to the universal ribosomal protein uS17 family. Part of the 30S ribosomal subunit.

Its function is as follows. One of the primary rRNA binding proteins, it binds specifically to the 5'-end of 16S ribosomal RNA. This is Small ribosomal subunit protein uS17 from Haemophilus influenzae (strain 86-028NP).